Consider the following 89-residue polypeptide: Small ribosomal subunit protein uS17 (89 aa).

It belongs to the universal ribosomal protein uS17 family. Part of the 30S ribosomal subunit.

Its function is as follows. One of the primary rRNA binding proteins, it binds specifically to the 5'-end of 16S ribosomal RNA. This is Small ribosomal subunit protein uS17 from Chlorobium chlorochromatii (strain CaD3).